The following is a 248-amino-acid chain: Tyrosine recombinase XerD-like (248 aa).

Residues 1–72 (MIAFIEPFLA…TVNQFLYYLY (72 aa)) enclose the Core-binding (CB) domain. The Tyr recombinase domain maps to 92–248 (SLKPQLTRLD…PITLEKYYKM (157 aa)). The active site involves Arg213. Tyr245 serves as the catalytic O-(3'-phospho-DNA)-tyrosine intermediate.

Belongs to the 'phage' integrase family. XerD-like subfamily.

It is found in the cytoplasm. Putative tyrosine recombinase. Not involved in the cutting and rejoining of the recombining DNA molecules on dif(SL) site. The protein is Tyrosine recombinase XerD-like of Streptococcus equi subsp. zooepidemicus (strain H70).